Here is a 210-residue protein sequence, read N- to C-terminus: Large ribosomal subunit protein bL9 (210 aa).

Positions Glu-172–Ala-210 are disordered. A compositionally biased stretch (acidic residues) spans Ala-199–Ala-210.

The protein belongs to the bacterial ribosomal protein bL9 family.

Functionally, binds to the 23S rRNA. The polypeptide is Large ribosomal subunit protein bL9 (Sphingopyxis alaskensis (strain DSM 13593 / LMG 18877 / RB2256) (Sphingomonas alaskensis)).